A 425-amino-acid chain; its full sequence is Lysosome-associated membrane glycoprotein 2 (425 aa).

The first 27 residues, 1-27, serve as a signal peptide directing secretion; it reads MAPPRCPAGLALLLLLLGACGFFQSYA. A first lumenal domain region spans residues 28 to 192; sequence VEVDVKDASN…SKKESRCYAD (165 aa). Topologically, residues 28-389 are lumenal; it reads VEVDVKDASN…EECFADSDLN (362 aa). Asparagine 37, asparagine 56, asparagine 62, asparagine 74, asparagine 100, asparagine 105, asparagine 120, asparagine 163, asparagine 170, asparagine 179, asparagine 206, asparagine 232, asparagine 239, asparagine 252, asparagine 276, asparagine 287, asparagine 298, asparagine 312, asparagine 320, and asparagine 331 each carry an N-linked (GlcNAc...) asparagine glycan. An intrachain disulfide couples cysteine 40 to cysteine 78. Cysteines 153 and 189 form a disulfide. Positions 193-238 are hinge; sequence TPTAAPTVLPTVANVTTASTTISPAPTTAPKPAENPVTGNYSLKTG. Residues 239–390 are second lumenal domain; sequence NKTCLLATVG…ECFADSDLNF (152 aa). An intrachain disulfide couples cysteine 242 to cysteine 274. Residues cysteine 345 and cysteine 382 are joined by a disulfide bond. Residues 390 to 414 form a helical membrane-spanning segment; the sequence is FLIPVAVGMALGFLIILVFISYIIG. Residues 415–425 lie on the Cytoplasmic side of the membrane; sequence RRKSRTGYQSV. An important for binding and subsequent lysosomal degradation of target proteins region spans residues 416 to 419; sequence RKSR.

The protein belongs to the LAMP family. In terms of assembly, monomer. Forms large homooligomers. In terms of processing, extensively N-glycosylated. Contains a minor proportion of O-linked glycans.

The protein resides in the lysosome membrane. It is found in the endosome membrane. It localises to the cell membrane. Its subcellular location is the cytoplasmic vesicle. The protein localises to the autophagosome membrane. Functionally, lysosomal membrane glycoprotein which plays an important role in lysosome biogenesis, lysosomal pH regulation and autophagy. Plays an important role in chaperone-mediated autophagy, a process that mediates lysosomal degradation of proteins in response to various stresses and as part of the normal turnover of proteins with a long biological half-live. In the chaperone-mediated autophagy, acts downstream of chaperones, such as HSPA8/HSC70, which recognize and bind substrate proteins and mediate their recruitment to lysosomes, where target proteins bind LAMP2. Plays a role in lysosomal protein degradation in response to starvation. Required for the fusion of autophagosomes with lysosomes during autophagy. This is Lysosome-associated membrane glycoprotein 2 (LAMP2) from Gallus gallus (Chicken).